The sequence spans 457 residues: Glycine receptor subunit alpha-1 (457 aa).

The first 28 residues, 1-28, serve as a signal peptide directing secretion; it reads MYSFNTLRLYLWETIVFFSLAASKEAEA. Over 29 to 250 the chain is Extracellular; it reads ARSAPKPMSP…RFHLERQMGY (222 aa). An N-linked (GlcNAc...) asparagine glycan is attached at Asn-66. Residues Arg-93 and Ser-157 each contribute to the glycine site. Cys-166 and Cys-180 are oxidised to a cystine. The Zn(2+) site is built by Glu-220 and Asp-222. A disulfide bridge links Cys-226 with Cys-237. A strychnine-binding site is contributed by 230-235; sequence YNTGKF. Glycine is bound at residue Thr-232. His-243 lines the Zn(2+) pocket. A helical membrane pass occupies residues 251–272; that stretch reads YLIQMYIPSLLIVILSWISFWI. The Cytoplasmic portion of the chain corresponds to 273-277; that stretch reads NMDAA. A helical membrane pass occupies residues 278–298; that stretch reads PARVGLGITTVLTMTTQSSGS. The Extracellular segment spans residues 299-309; the sequence is RASLPKVSYVK. A helical membrane pass occupies residues 310–330; it reads AIDIWMAVCLLFVFSALLEYA. Topologically, residues 331 to 425 are cytoplasmic; sequence AVNFVSRQHK…FIQRAKKIDK (95 aa). The disordered stretch occupies residues 391-410; the sequence is KGANNSNTTNPPPAPSKSPE. The helical transmembrane segment at 426 to 446 threads the bilayer; sequence ISRIGFPMAFLIFNMFYWIIY. The Extracellular portion of the chain corresponds to 447–457; that stretch reads KIVRREDVHNQ.

Belongs to the ligand-gated ion channel (TC 1.A.9) family. Glycine receptor (TC 1.A.9.3) subfamily. GLRA1 sub-subfamily. Interacts with GLRB to form heteropentameric channels; this is probably the predominant form in vivo. Heteropentamer composed of four GLRA1 subunits and one GLRB subunit. Heteropentamer composed of two GLRA1 and three GLRB. Heteropentamer composed of three GLRA1 and two GLRB. Homopentamer (in vitro). Both homopentamers and heteropentamers form functional ion channels, but their characteristics are subtly different.

It is found in the postsynaptic cell membrane. It localises to the synapse. The protein resides in the perikaryon. Its subcellular location is the cell projection. The protein localises to the dendrite. It is found in the cell membrane. The catalysed reaction is chloride(in) = chloride(out). Channel opening is triggered by extracellular glycine. Channel characteristics depend on the subunit composition; heteropentameric channels are activated by lower glycine levels and display faster desensitization. Channel opening is also triggered by taurine and beta-alanine. Channel activity is potentiated by nanomolar concentrations of Zn(2+); half-maximal activation is observed with 37 nM Zn(2+). Inhibited by higher Zn(2+) levels; haf-maximal inhibition occurs at 20 uM Zn(2+). Inhibited by strychnine. Strychnine binding locks the channel in a closed conformation and prevents channel opening in response to extracellular glycine. Inhibited by lindane. Inhibited by picrotoxin. Functionally, subunit of heteromeric glycine-gated chloride channels. Plays an important role in the down-regulation of neuronal excitability. Contributes to the generation of inhibitory postsynaptic currents. Channel activity is potentiated by ethanol. Potentiation of channel activity by intoxicating levels of ethanol contribute to the sedative effects of ethanol. This chain is Glycine receptor subunit alpha-1 (GLRA1), found in Homo sapiens (Human).